The following is a 216-amino-acid chain: Adenylate kinase (216 aa).

10–15 provides a ligand contact to ATP; sequence GAGKGT. Positions 30–59 are NMP; sequence STGDMLRAAVSAQTEVGKRAKAVMDAGKLV. AMP contacts are provided by residues T31, R36, 57-59, 85-88, and Q92; these read KLV and GFPR. The interval 126 to 163 is LID; sequence GRYTCANCGTGYHDENLKPKVEGVCDKCGSTHFKRRPD. R127 contacts ATP. Zn(2+)-binding residues include C130, C133, C150, and C153. Positions 160 and 172 each coordinate AMP. A200 contacts ATP.

Belongs to the adenylate kinase family. As to quaternary structure, monomer.

Its subcellular location is the cytoplasm. The catalysed reaction is AMP + ATP = 2 ADP. Its pathway is purine metabolism; AMP biosynthesis via salvage pathway; AMP from ADP: step 1/1. In terms of biological role, catalyzes the reversible transfer of the terminal phosphate group between ATP and AMP. Plays an important role in cellular energy homeostasis and in adenine nucleotide metabolism. This is Adenylate kinase from Allorhizobium ampelinum (strain ATCC BAA-846 / DSM 112012 / S4) (Agrobacterium vitis (strain S4)).